The sequence spans 223 residues: Urease accessory protein UreG (223 aa).

The segment at 1 to 31 (MAKHSHDHTHDHHDRPRRVRKPGEPLRIGVG) is disordered. Position 32–39 (32–39 (GPVGSGKT)) interacts with GTP.

The protein belongs to the SIMIBI class G3E GTPase family. UreG subfamily. Homodimer. UreD, UreF and UreG form a complex that acts as a GTP-hydrolysis-dependent molecular chaperone, activating the urease apoprotein by helping to assemble the nickel containing metallocenter of UreC. The UreE protein probably delivers the nickel.

The protein resides in the cytoplasm. In terms of biological role, facilitates the functional incorporation of the urease nickel metallocenter. This process requires GTP hydrolysis, probably effectuated by UreG. This is Urease accessory protein UreG from Mycobacterium marinum (strain ATCC BAA-535 / M).